The following is a 95-amino-acid chain: MRTLALLAAILLVTLQAQAELHSGMADDGVDQQQPRAQDLDVAVYIKQDETSPLEVLGAKAGVFCTCRGFLCGSGERASGSCTINGVRHTLCCRR.

The N-terminal stretch at methionine 1 to alanine 19 is a signal peptide. Positions glutamate 20–glycine 62 are excised as a propeptide. Cystine bridges form between cysteine 65-cysteine 93, cysteine 67-cysteine 82, and cysteine 72-cysteine 92.

It belongs to the alpha-defensin family.

It is found in the secreted. Its function is as follows. Microbicidal activity. The sequence is that of Neutrophil antibiotic peptide NP-5 from Oryctolagus cuniculus (Rabbit).